Consider the following 250-residue polypeptide: PF03932 family protein CutC (250 aa).

The protein belongs to the CutC family.

It is found in the cytoplasm. This is PF03932 family protein CutC from Vibrio vulnificus (strain YJ016).